Reading from the N-terminus, the 435-residue chain is Enolase (435 aa).

A (2R)-2-phosphoglycerate-binding site is contributed by Q163. E205 functions as the Proton donor in the catalytic mechanism. Positions 243, 292, and 319 each coordinate Mg(2+). (2R)-2-phosphoglycerate is bound by residues K344, R373, S374, and K395. Catalysis depends on K344, which acts as the Proton acceptor.

The protein belongs to the enolase family. The cofactor is Mg(2+).

The protein resides in the cytoplasm. It localises to the secreted. Its subcellular location is the cell surface. The enzyme catalyses (2R)-2-phosphoglycerate = phosphoenolpyruvate + H2O. It participates in carbohydrate degradation; glycolysis; pyruvate from D-glyceraldehyde 3-phosphate: step 4/5. Functionally, catalyzes the reversible conversion of 2-phosphoglycerate (2-PG) into phosphoenolpyruvate (PEP). It is essential for the degradation of carbohydrates via glycolysis. This Streptococcus suis (strain 98HAH33) protein is Enolase.